Consider the following 141-residue polypeptide: Hemoglobin subunit alpha-D (141 aa).

Residues 1–141 enclose the Globin domain; sequence MLTADDKKLL…VAAVLAEKYR (141 aa). Heme b-binding residues include H58 and H87.

The protein belongs to the globin family. Heterotetramer of two alpha-D chains and two beta chains. Red blood cells.

Its function is as follows. Involved in oxygen transport from the lung to the various peripheral tissues. The chain is Hemoglobin subunit alpha-D (HBAD) from Chloephaga melanoptera (Andean goose).